Here is an 889-residue protein sequence, read N- to C-terminus: Envelope glycoprotein gp160 (889 aa).

The signal sequence occupies residues 1 to 22; that stretch reads MGCLGNQLLIALLLLSASGIYC. Topologically, residues 23–704 are extracellular; the sequence is VQYVTVFYGI…TSWIKYIQYG (682 aa). Asparagine 37 carries an N-linked (GlcNAc...) asparagine; by host glycan. A disulfide bridge links cysteine 44 with cysteine 57. Asparagine 70 and asparagine 114 each carry an N-linked (GlcNAc...) asparagine; by host glycan. 5 disulfide bridges follow: cysteine 101/cysteine 226, cysteine 108/cysteine 217, cysteine 113/cysteine 175, cysteine 239/cysteine 269, and cysteine 249/cysteine 261. A V1 region spans residues 113–174; the sequence is CNKSETDRWG…TGLEQEPMVS (62 aa). The disordered stretch occupies residues 120–145; that stretch reads RWGLTGTPAPTTTQTTTTQASTTPTS. Low complexity predominate over residues 126-145; that stretch reads TPAPTTTQTTTTQASTTPTS. N-linked (GlcNAc...) asparagine; by host glycosylation is found at asparagine 153, asparagine 163, asparagine 178, asparagine 191, asparagine 206, asparagine 218, asparagine 250, asparagine 253, asparagine 260, asparagine 284, asparagine 290, asparagine 301, asparagine 312, asparagine 322, asparagine 377, asparagine 422, asparagine 470, asparagine 486, and asparagine 489. Residues 175–217 are V2; sequence CKFNMTGLKRDKKREYNETWYSRDLVCEQNSNETDSKCYMNHC. The tract at residues 317–349 is V3; the sequence is CRRPGNKTVLPVTIMSGLVFHSQPINERPKQAW. Cysteine 317 and cysteine 350 are oxidised to a cystine. Cystine bridges form between cysteine 401-cysteine 469 and cysteine 408-cysteine 442. The tract at residues 408–442 is V4; the sequence is CKMNWFLNWVENIQNGSRWTSQNQKERQRRNYVPC. Residues 485–492 are V5; the sequence is GNETNITM. Residues 536–556 are fusion peptide; the sequence is GVFVLGFLGFLATAGSAMSAA. Residues 599–615 form an immunosuppression region; that stretch reads LQTRVTAIEKYLKDQAQ. Residues asparagine 635, asparagine 644, and asparagine 660 are each glycosylated (N-linked (GlcNAc...) asparagine; by host). Residues 648-675 adopt a coiled-coil conformation; that stretch reads QEWEKQVNFLEANITQSLEEAQIQQEKN. The tract at residues 681-702 is MPER; binding to GalCer; it reads KLNSWDIFGNWFDLTSWIKYIQ. A helical membrane pass occupies residues 705 to 725; it reads VLIVLGVIGLRIVIYVVQMLA. At 726–889 the chain is on the cytoplasmic side; it reads RLRQGYRPVF…IRQGLELTLL (164 aa). A YXXV motif; contains endocytosis signal motif is present at residues 731-734; sequence YRPV. Cysteine 797 carries the S-palmitoyl cysteine; by host lipid modification. Residues 888-889 carry the Di-leucine internalization motif motif; sequence LL.

As to quaternary structure, the mature envelope protein (Env) consists of a homotrimer of non-covalently associated gp120-gp41 heterodimers. The resulting complex protrudes from the virus surface as a spike. Interacts with host CD4 and CCR5. Gp120 also interacts with the C-type lectins CD209/DC-SIGN and CLEC4M/DC-SIGNR (collectively referred to as DC-SIGN(R)). The mature envelope protein (Env) consists of a homotrimer of non-covalently associated gp120-gp41 heterodimers. The resulting complex protrudes from the virus surface as a spike. Post-translationally, specific enzymatic cleavages in vivo yield mature proteins. Envelope glycoproteins are synthesized as an inactive precursor that is heavily N-glycosylated and processed likely by host cell furin in the Golgi to yield the mature SU and TM proteins. The cleavage site between SU and TM requires the minimal sequence [KR]-X-[KR]-R. Palmitoylation of the transmembrane protein and of Env polyprotein (prior to its proteolytic cleavage) is essential for their association with host cell membrane lipid rafts. Palmitoylation is therefore required for envelope trafficking to classical lipid rafts, but not for viral replication.

Its subcellular location is the virion membrane. The protein resides in the host cell membrane. It localises to the host endosome membrane. Functionally, the surface protein gp120 (SU) attaches the virus to the host lymphoid cell by binding to the primary receptor CD4. This interaction induces a structural rearrangement creating a high affinity binding site for a chemokine coreceptor like CCR5. This peculiar 2 stage receptor-interaction strategy allows gp120 to maintain the highly conserved coreceptor-binding site in a cryptic conformation, protected from neutralizing antibodies. These changes are transmitted to the transmembrane protein gp41 and are thought to activate its fusogenic potential by unmasking its fusion peptide. In terms of biological role, surface protein gp120 (SU) may target the virus to gut-associated lymphoid tissue (GALT) by binding host ITGA4/ITGB7 (alpha-4/beta-7 integrins), a complex that mediates T-cell migration to the GALT. Interaction between gp120 and ITGA4/ITGB7 would allow the virus to enter GALT early in the infection, infecting and killing most of GALT's resting CD4+ T-cells. This T-cell depletion is believed to be the major insult to the host immune system leading to AIDS. Its function is as follows. The surface protein gp120 is a ligand for CD209/DC-SIGN and CLEC4M/DC-SIGNR, which are respectively found on dendritic cells (DCs), and on endothelial cells of liver sinusoids and lymph node sinuses. These interactions allow capture of viral particles at mucosal surfaces by these cells and subsequent transmission to permissive cells. DCs are professional antigen presenting cells, critical for host immunity by inducing specific immune responses against a broad variety of pathogens. They act as sentinels in various tissues where they take up antigen, process it, and present it to T-cells following migration to lymphoid organs. SIV subverts the migration properties of dendritic cells to gain access to CD4+ T-cells in lymph nodes. Virus transmission to permissive T-cells occurs either in trans (without DCs infection, through viral capture and transmission), or in cis (following DCs productive infection, through the usual CD4-gp120 interaction), thereby inducing a robust infection. In trans infection, bound virions remain infectious over days and it is proposed that they are not degraded, but protected in non-lysosomal acidic organelles within the DCs close to the cell membrane thus contributing to the viral infectious potential during DCs' migration from the periphery to the lymphoid tissues. On arrival at lymphoid tissues, intact virions recycle back to DCs' cell surface allowing virus transmission to CD4+ T-cells. Virion capture also seems to lead to MHC-II-restricted viral antigen presentation, and probably to the activation of SIV-specific CD4+ cells. The transmembrane protein gp41 (TM) acts as a class I viral fusion protein. Under the current model, the protein has at least 3 conformational states: pre-fusion native state, pre-hairpin intermediate state, and post-fusion hairpin state. During fusion of viral and target intracellular membranes, the coiled coil regions (heptad repeats) assume a trimer-of-hairpins structure, positioning the fusion peptide in close proximity to the C-terminal region of the ectodomain. The formation of this structure appears to drive apposition and subsequent fusion of viral and target cell membranes. Complete fusion occurs in host cell endosomes. The virus undergoes clathrin-dependent internalization long before endosomal fusion, thus minimizing the surface exposure of conserved viral epitopes during fusion and reducing the efficacy of inhibitors targeting these epitopes. Membranes fusion leads to delivery of the nucleocapsid into the cytoplasm. Functionally, the envelope glycoprotein gp160 precursor down-modulates cell surface CD4 antigen by interacting with it in the endoplasmic reticulum and blocking its transport to the cell surface. In terms of biological role, the gp120-gp41 heterodimer allows rapid transcytosis of the virus through CD4 negative cells such as simple epithelial monolayers of the intestinal, rectal and endocervical epithelial barriers. Both gp120 and gp41 specifically recognize glycosphingolipids galactosyl-ceramide (GalCer) or 3' sulfo-galactosyl-ceramide (GalS) present in the lipid rafts structures of epithelial cells. Binding to these alternative receptors allows the rapid transcytosis of the virus through the epithelial cells. This transcytotic vesicle-mediated transport of virions from the apical side to the basolateral side of the epithelial cells does not involve infection of the cells themselves. This Simian immunodeficiency virus (isolate PBj14/BCL-3) (SIV-sm) protein is Envelope glycoprotein gp160 (env).